The primary structure comprises 536 residues: Ecdysone receptor (536 aa).

A modulating region spans residues 1–114; sequence MKTENLIVTT…GPVPRQQEEL (114 aa). The tract at residues 77–107 is disordered; it reads SPNSKLDDGNMSVHMGDGLDGKKSSSKKGPV. NR C4-type zinc fingers lie at residues 115–135 and 151–175; these read CLVC…CEGC and CKFG…LKKC. The nuclear receptor DNA-binding region spans 115–187; the sequence is CLVCGDRASG…VGMRPECVVP (73 aa). Residues 278 to 514 enclose the NR LBD domain; the sequence is NQVAVIYKLI…FLEEVWDVGD (237 aa).

This sequence belongs to the nuclear hormone receptor family. NR1 subfamily.

It localises to the nucleus. Functionally, receptor for ecdysone. Binds to ecdysone response elements (ECRES). The chain is Ecdysone receptor (EcR) from Chironomus tentans (Midge).